Here is a 467-residue protein sequence, read N- to C-terminus: ATP synthase subunit beta (467 aa).

Residue Gly156 to Thr163 coordinates ATP.

This sequence belongs to the ATPase alpha/beta chains family. In terms of assembly, F-type ATPases have 2 components, CF(1) - the catalytic core - and CF(0) - the membrane proton channel. CF(1) has five subunits: alpha(3), beta(3), gamma(1), delta(1), epsilon(1). CF(0) has three main subunits: a(1), b(2) and c(9-12). The alpha and beta chains form an alternating ring which encloses part of the gamma chain. CF(1) is attached to CF(0) by a central stalk formed by the gamma and epsilon chains, while a peripheral stalk is formed by the delta and b chains.

It localises to the cell inner membrane. It catalyses the reaction ATP + H2O + 4 H(+)(in) = ADP + phosphate + 5 H(+)(out). Functionally, produces ATP from ADP in the presence of a proton gradient across the membrane. The catalytic sites are hosted primarily by the beta subunits. The sequence is that of ATP synthase subunit beta from Ralstonia nicotianae (strain ATCC BAA-1114 / GMI1000) (Ralstonia solanacearum).